The chain runs to 863 residues: Leucine--tRNA ligase (863 aa).

Residues 42-52 (PYPSGRLHMGH) carry the 'HIGH' region motif. Positions 622-626 (KMSKS) match the 'KMSKS' region motif. Lys-625 provides a ligand contact to ATP.

This sequence belongs to the class-I aminoacyl-tRNA synthetase family.

It localises to the cytoplasm. It catalyses the reaction tRNA(Leu) + L-leucine + ATP = L-leucyl-tRNA(Leu) + AMP + diphosphate. The chain is Leucine--tRNA ligase from Shewanella denitrificans (strain OS217 / ATCC BAA-1090 / DSM 15013).